The chain runs to 575 residues: MVTKLEQLIAQTILQGFDAQYGRFLEVTAGAQHRFEQADWHAVQQAMKKRIHLYDSHVGLVVEQLKHITDQRCFDVNFLTRVKEIYTGLLPDYPRFEIAESFFNSVYCRLFKHRDLTPDKLFVFSSQPERRFREIPRPLARDFAPKGDLSGMLQVVLNDLPLRLPWENLPRDIGYIATALRQNFTDEQLATARFQVANELFYRNKAAWLVGKLRLADEVYPFLLPIHHNESGGLFIDTCLTSKAEASIVFGFARSYFMVYAPLPAAMVEWLREILPGKSTAELYMAIGCQKHGKTESYREYLTFVHQSSEQFIIAPGVKGMVMLVFTLPSFDRVFKVIKDQFAPQKEVSQTRVLECYQLVKEHDRVGRMADTQEYENFVIDKHRISAELLTELQREVPEKLEDLGDQIIIKHLYMERRMTPLNLYIEQANDQQLKDAIEEYGNAIKQLAAANIFPGDMLFKNFGVTRHGRVVFYDYDEICYMTEVNFRDIPPPRYPEDEMASEPWYSVSPNDVFPEEFRHFLCTDLKVRHFFEEMHSDLFHASYWRGLQQRIKDGHVEDVFAYRRKQRFSQRVIS.

Residues 315-321 (APGVKGM) and K336 each bind ATP. The active site involves D371.

This sequence belongs to the AceK family.

The protein localises to the cytoplasm. It carries out the reaction L-seryl-[isocitrate dehydrogenase] + ATP = O-phospho-L-seryl-[isocitrate dehydrogenase] + ADP + H(+). Functionally, bifunctional enzyme which can phosphorylate or dephosphorylate isocitrate dehydrogenase (IDH) on a specific serine residue. This is a regulatory mechanism which enables bacteria to bypass the Krebs cycle via the glyoxylate shunt in response to the source of carbon. When bacteria are grown on glucose, IDH is fully active and unphosphorylated, but when grown on acetate or ethanol, the activity of IDH declines drastically concomitant with its phosphorylation. The polypeptide is Isocitrate dehydrogenase kinase/phosphatase (Yersinia enterocolitica serotype O:8 / biotype 1B (strain NCTC 13174 / 8081)).